Reading from the N-terminus, the 44-residue chain is Protein PsbN (44 aa).

A helical membrane pass occupies residues 6–26 (FFFTIFVWFLLISVTGYSIYV).

Belongs to the PsbN family.

It localises to the plastid. It is found in the chloroplast thylakoid membrane. In terms of biological role, may play a role in photosystem I and II biogenesis. This Bigelowiella natans (Pedinomonas minutissima) protein is Protein PsbN.